The following is a 470-amino-acid chain: Glutamate--tRNA ligase (470 aa).

The short motif at 9-19 is the 'HIGH' region element; the sequence is PSPTGFLHVGG. The 'KMSKS' region motif lies at 236–240; the sequence is KLSKR. Lys239 serves as a coordination point for ATP.

The protein belongs to the class-I aminoacyl-tRNA synthetase family. Glutamate--tRNA ligase type 1 subfamily. Monomer.

Its subcellular location is the cytoplasm. The catalysed reaction is tRNA(Glu) + L-glutamate + ATP = L-glutamyl-tRNA(Glu) + AMP + diphosphate. Functionally, catalyzes the attachment of glutamate to tRNA(Glu) in a two-step reaction: glutamate is first activated by ATP to form Glu-AMP and then transferred to the acceptor end of tRNA(Glu). The chain is Glutamate--tRNA ligase from Psychromonas ingrahamii (strain DSM 17664 / CCUG 51855 / 37).